Consider the following 433-residue polypeptide: V-type ATP synthase beta chain (433 aa).

This sequence belongs to the ATPase alpha/beta chains family.

Functionally, produces ATP from ADP in the presence of a proton gradient across the membrane. The V-type beta chain is a regulatory subunit. The polypeptide is V-type ATP synthase beta chain (Borrelia turicatae (strain 91E135)).